Here is a 165-residue protein sequence, read N- to C-terminus: MSHPALTQLRALRYCKEIPALEPQLLDWLLLEDSMTKRFEQQGKTVSVTMIREGFVEQNEIPEELPLLPKESRYWLREILLCADGEPWLAGRTVVPVSTLSGPELALQKLGKTPLGRYLFTSSTLTRDFIEIGRDAGLWGRRSRLRLSGKPLLLTELFLPASPLY.

Residues Met-35, Arg-77, Leu-115, and Glu-156 each coordinate substrate.

Belongs to the UbiC family. As to quaternary structure, monomer.

The protein resides in the cytoplasm. It catalyses the reaction chorismate = 4-hydroxybenzoate + pyruvate. It participates in cofactor biosynthesis; ubiquinone biosynthesis. Its function is as follows. Removes the pyruvyl group from chorismate, with concomitant aromatization of the ring, to provide 4-hydroxybenzoate (4HB) for the ubiquinone pathway. This Escherichia coli O157:H7 protein is Chorismate pyruvate-lyase.